A 63-amino-acid chain; its full sequence is Large ribosomal subunit protein uL29 (63 aa).

It belongs to the universal ribosomal protein uL29 family.

The chain is Large ribosomal subunit protein uL29 from Enterobacter sp. (strain 638).